The chain runs to 310 residues: Ribonuclease HIII (310 aa).

The 217-residue stretch at 90-306 folds into the RNase H type-2 domain; the sequence is FQCIGSDEAG…RKKAENLVQK (217 aa). The a divalent metal cation site is built by Asp-96, Glu-97, and Asp-201.

The protein belongs to the RNase HII family. RnhC subfamily. It depends on Mn(2+) as a cofactor. Requires Mg(2+) as cofactor.

Its subcellular location is the cytoplasm. The enzyme catalyses Endonucleolytic cleavage to 5'-phosphomonoester.. Endonuclease that specifically degrades the RNA of RNA-DNA hybrids. This chain is Ribonuclease HIII, found in Staphylococcus saprophyticus subsp. saprophyticus (strain ATCC 15305 / DSM 20229 / NCIMB 8711 / NCTC 7292 / S-41).